The primary structure comprises 288 residues: Mortality factor 4-like protein 2 (288 aa).

Over residues 1–15 the composition is skewed to polar residues; sequence MSSRKQASQTRGQQS. Residues 1 to 115 form a disordered region; it reads MSSRKQASQT…DPTVESEEAF (115 aa). Position 71 is a phosphoserine (Ser-71). The MRG domain occupies 117 to 288; it reads SRMEVKVKIP…ASADYHRKAL (172 aa).

As to quaternary structure, component of the NuA4 histone acetyltransferase complex which contains the catalytic subunit KAT5/TIP60 and the subunits EP400, TRRAP/PAF400, BRD8/SMAP, EPC1, DMAP1/DNMAP1, RUVBL1/TIP49, RUVBL2, ING3, actin, ACTL6A/BAF53A, MORF4L1/MRG15, MORF4L2/MRGX, MRGBP, YEATS4/GAS41 and VPS72/YL1. The NuA4 complex interacts with MYC and the adenovirus E1A protein. MORF4L1 may also participate in the formation of NuA4 related complexes which lack the KAT5/TIP60 catalytic subunit, but which include the SWI/SNF related protein SRCAP. Component of the MSIN3A histone deacetylase complex, which includes SIN3A, HDAC2, ARID4B, MORF4L1, RBBP4/RbAp48, and RBBP7/RbAp46. Interacts with MRFAP1 and RB1. May also interact with one or more as yet undefined members of the TLE (transducin-like enhancer of split) family of transcriptional repressors.

The protein localises to the nucleus. Its function is as follows. Component of the NuA4 histone acetyltransferase complex which is involved in transcriptional activation of select genes principally by acetylation of nucleosomal histone H4 and H2A. This modification may both alter nucleosome - DNA interactions and promote interaction of the modified histones with other proteins which positively regulate transcription. This complex may be required for the activation of transcriptional programs associated with oncogene and proto-oncogene mediated growth induction, tumor suppressor mediated growth arrest and replicative senescence, apoptosis, and DNA repair. The NuA4 complex ATPase and helicase activities seem to be, at least in part, contributed by the association of RUVBL1 and RUVBL2 with EP400. NuA4 may also play a direct role in DNA repair when directly recruited to sites of DNA damage. Also a component of the MSIN3A complex which acts to repress transcription by deacetylation of nucleosomal histones. In Rattus norvegicus (Rat), this protein is Mortality factor 4-like protein 2 (Morf4l2).